The primary structure comprises 310 residues: Proline dehydrogenase (310 aa).

Position 98 (Lys98) interacts with substrate. The active site involves Asp135. FAD-binding positions include Met136, Gln166, 187 to 192 (RMVKGA), 229 to 230 (TH), and 292 to 295 (RIAE). Arg187 is an active-site residue. Residue 291–292 (RR) coordinates substrate.

Belongs to the proline dehydrogenase family. It depends on FAD as a cofactor.

It carries out the reaction L-proline + a quinone = (S)-1-pyrroline-5-carboxylate + a quinol + H(+). It participates in amino-acid degradation; L-proline degradation into L-glutamate; L-glutamate from L-proline: step 1/2. Converts proline to delta-1-pyrroline-5-carboxylate. This is Proline dehydrogenase from Deinococcus radiodurans (strain ATCC 13939 / DSM 20539 / JCM 16871 / CCUG 27074 / LMG 4051 / NBRC 15346 / NCIMB 9279 / VKM B-1422 / R1).